The chain runs to 1091 residues: ATP-dependent helicase/deoxyribonuclease subunit B (1091 aa).

It belongs to the helicase family. AddB/RexB type 2 subfamily. Heterodimer of AddA and RexB. Requires Mg(2+) as cofactor.

In terms of biological role, the heterodimer acts as both an ATP-dependent DNA helicase and an ATP-dependent, dual-direction single-stranded exonuclease. Recognizes the chi site generating a DNA molecule suitable for the initiation of homologous recombination. This subunit has 5' -&gt; 3' nuclease activity but not helicase activity. This chain is ATP-dependent helicase/deoxyribonuclease subunit B, found in Streptococcus pneumoniae (strain ATCC 700669 / Spain 23F-1).